The chain runs to 88 residues: Putative membrane protein insertion efficiency factor (88 aa).

This sequence belongs to the UPF0161 family.

The protein localises to the cell inner membrane. Could be involved in insertion of integral membrane proteins into the membrane. The sequence is that of Putative membrane protein insertion efficiency factor from Synechococcus sp. (strain CC9311).